Here is a 600-residue protein sequence, read N- to C-terminus: PWWP domain-containing protein 2B (600 aa).

Disordered stretches follow at residues 81-115, 143-171, 186-350, 366-408, and 426-477; these read ETGPLHPHHKDPEKDQPPKTAVSEPPPPLIPPVPA, WVPQPPPRTIKRTRRRLSRNRDPGRLILS, KSTV…LGDG, GCPR…PQGK, and DCTS…TVPP. Over residues 104–115 the composition is skewed to pro residues; it reads EPPPPLIPPVPA. The span at 151-160 shows a compositional bias: basic residues; that stretch reads TIKRTRRRLS. Positions 187 to 200 are enriched in polar residues; the sequence is STVSPQEASPSPLN. A phosphoserine mark is found at serine 190 and serine 210. Residues 239–252 show a composition bias toward basic and acidic residues; sequence EKREEDRVAGERVP. The residue at position 254 (serine 254) is a Phosphoserine. The span at 286 to 297 shows a compositional bias: polar residues; sequence PQQSLQNGSQDS. Residues 298-309 are compositionally biased toward basic and acidic residues; it reads EVSRDVEPRGGG. Positions 328–339 are enriched in pro residues; sequence PVPPISDLPPPK. Over residues 381–395 the composition is skewed to low complexity; that stretch reads DGSSHGLEDLSSGSS. Polar residues predominate over residues 443 to 456; the sequence is SSGSEVTSPDTGDL. Serine 457 is subject to Phosphoserine. Over residues 457–468 the composition is skewed to low complexity; the sequence is SSGDSASVPSSS. Positions 500–560 constitute a PWWP domain; that stretch reads VGDIVWGKIH…ISKLSPFSEF (61 aa).

In terms of assembly, component of a MTA1-specific subcomplex of the NuRD complex composed of PWWP2B, MTA1 and HDAC1 but does not contain CHD4 and MBD3. Interacts with MTA1, MTA2, MTA3, HDAC1, HDAC2, RBBP4, RBBP7, BRCC3 and ZNF516. Does not interact with CHD4 and MBD3. Post-translationally, deubiquitinated by BRCC3; leading to its stabilization. Expressed in the brown adipose tissue.

The protein localises to the nucleus. Chromatin-binding protein that acts as an adapter between distinct nucleosome components (H3K36me3 or H2A.Z) and chromatin-modifying complexes, contributing to the regulation of the levels of histone acetylation at actively transcribed genes. Competes with CHD4 and MBD3 for interaction with MTA1 to form a NuRD subcomplex, preventing the formation of full NuRD complex (containing CHD4 and MBD3), leading to recruitment of HDACs to gene promoters resulting in turn in the deacetylation of nearby H3K27 and H2A.Z. Plays a role in facilitating transcriptional elongation through regulation of histone acetylation. Negatively regulates brown adipocyte thermogenesis by interacting with and stabilizing HDAC1 at the UCP1 gene promoter, thereby promoting histone deacetylation at the promoter leading to the repression of UCP1 expression. In Mus musculus (Mouse), this protein is PWWP domain-containing protein 2B (Pwwp2b).